A 183-amino-acid polypeptide reads, in one-letter code: Cell division protein SepF (183 aa).

The tract at residues 149 to 183 (SSEESAAPSVMAREEEATAPAAPSPAWGTQDAING) is disordered.

This sequence belongs to the SepF family. Homodimer. Interacts with FtsZ.

It localises to the cytoplasm. In terms of biological role, cell division protein that is part of the divisome complex and is recruited early to the Z-ring. Probably stimulates Z-ring formation, perhaps through the cross-linking of FtsZ protofilaments. Its function overlaps with FtsA. The chain is Cell division protein SepF from Synechococcus sp. (strain RCC307).